The chain runs to 375 residues: Alcohol dehydrogenase 1 (375 aa).

N-acetylserine is present on serine 2. Positions 47, 68, 98, 101, 104, 112, and 175 each coordinate Zn(2+). NAD(+)-binding positions include 200–205 (WSGRVG), aspartate 224, and lysine 229. Residue lysine 234 is modified to N6-succinyllysine. Residue 293 to 295 (VGV) coordinates NAD(+). Lysine 340 bears the N6-succinyllysine mark. Arginine 370 contributes to the NAD(+) binding site.

Belongs to the zinc-containing alcohol dehydrogenase family. Class-I subfamily. In terms of assembly, homodimer. Zn(2+) serves as cofactor.

The protein localises to the cytoplasm. The catalysed reaction is a primary alcohol + NAD(+) = an aldehyde + NADH + H(+). It carries out the reaction a secondary alcohol + NAD(+) = a ketone + NADH + H(+). The protein is Alcohol dehydrogenase 1 (ADH1) of Geomys attwateri (Attwater's pocket gopher).